Reading from the N-terminus, the 387-residue chain is Succinate--CoA ligase [ADP-forming] subunit beta (387 aa).

ATP is bound by residues Lys-46, 53–55 (GRG), Glu-99, Cys-102, and Glu-107. Mg(2+) contacts are provided by Asn-196 and Asp-210. Substrate is bound by residues Asn-261 and 318 to 320 (GIV).

This sequence belongs to the succinate/malate CoA ligase beta subunit family. Heterotetramer of two alpha and two beta subunits. Mg(2+) serves as cofactor.

The enzyme catalyses succinate + ATP + CoA = succinyl-CoA + ADP + phosphate. It carries out the reaction GTP + succinate + CoA = succinyl-CoA + GDP + phosphate. Its pathway is carbohydrate metabolism; tricarboxylic acid cycle; succinate from succinyl-CoA (ligase route): step 1/1. Succinyl-CoA synthetase functions in the citric acid cycle (TCA), coupling the hydrolysis of succinyl-CoA to the synthesis of either ATP or GTP and thus represents the only step of substrate-level phosphorylation in the TCA. The beta subunit provides nucleotide specificity of the enzyme and binds the substrate succinate, while the binding sites for coenzyme A and phosphate are found in the alpha subunit. The polypeptide is Succinate--CoA ligase [ADP-forming] subunit beta (Campylobacter hominis (strain ATCC BAA-381 / DSM 21671 / CCUG 45161 / LMG 19568 / NCTC 13146 / CH001A)).